The chain runs to 273 residues: Proteasome subunit beta type-10 (273 aa).

The residue at position 1 (Met1) is an N-acetylmethionine. Residues 1-39 constitute a propeptide, removed in mature form; it reads MLKQAVEPTGGFSFENCQRNASLEHVLPGLRVPHARKTG. Residue Thr40 is the Nucleophile of the active site.

This sequence belongs to the peptidase T1B family. As to quaternary structure, the 26S proteasome consists of a 20S proteasome core and two 19S regulatory subunits. The 20S proteasome core is composed of 28 subunits that are arranged in four stacked rings, resulting in a barrel-shaped structure. The two end rings are each formed by seven alpha subunits, and the two central rings are each formed by seven beta subunits. The catalytic chamber with the active sites is on the inside of the barrel. Component of the immunoproteasome, where it displaces the equivalent housekeeping subunit PSMB7. Component of the spermatoproteasome, a form of the proteasome specifically found in testis. Post-translationally, autocleaved. The resulting N-terminal Thr residue of the mature subunit is responsible for the nucleophile proteolytic activity. In terms of tissue distribution, detected in liver (at protein level).

It is found in the cytoplasm. The protein resides in the nucleus. The catalysed reaction is Cleavage of peptide bonds with very broad specificity.. Its function is as follows. The proteasome is a multicatalytic proteinase complex which is characterized by its ability to cleave peptides with Arg, Phe, Tyr, Leu, and Glu adjacent to the leaving group at neutral or slightly basic pH. The proteasome has an ATP-dependent proteolytic activity. This subunit is involved in antigen processing to generate class I binding peptides. Plays a role in determining the T-cell repertoire for an antiviral T-cell response. This Mus musculus (Mouse) protein is Proteasome subunit beta type-10 (Psmb10).